We begin with the raw amino-acid sequence, 510 residues long: Bifunctional pantoate ligase/cytidylate kinase (510 aa).

Residues 1-276 (MNKIIIRKTE…CGKTRLIDHV (276 aa)) are pantoate--beta-alanine ligase. 29–36 (MGNLHDGH) lines the ATP pocket. His-36 (proton donor) is an active-site residue. Gln-61 serves as a coordination point for (R)-pantoate. Beta-alanine is bound at residue Gln-61. 150–153 (GEKD) serves as a coordination point for ATP. Gln-156 serves as a coordination point for (R)-pantoate. Residue 187–190 (FSSR) participates in ATP binding. The cytidylate kinase stretch occupies residues 277–510 (FLMKRKPIIA…LNIPKEIQLE (234 aa)).

In the N-terminal section; belongs to the pantothenate synthetase family. The protein in the C-terminal section; belongs to the cytidylate kinase family. Type 1 subfamily.

Its subcellular location is the cytoplasm. The enzyme catalyses (R)-pantoate + beta-alanine + ATP = (R)-pantothenate + AMP + diphosphate + H(+). The catalysed reaction is CMP + ATP = CDP + ADP. It catalyses the reaction dCMP + ATP = dCDP + ADP. It participates in cofactor biosynthesis; (R)-pantothenate biosynthesis; (R)-pantothenate from (R)-pantoate and beta-alanine: step 1/1. Its function is as follows. Catalyzes the condensation of pantoate with beta-alanine in an ATP-dependent reaction via a pantoyl-adenylate intermediate. Functionally, catalyzes the transfer of a phosphate group from ATP to either CMP or dCMP to form CDP or dCDP and ADP, respectively. In Prochlorococcus marinus subsp. pastoris (strain CCMP1986 / NIES-2087 / MED4), this protein is Bifunctional pantoate ligase/cytidylate kinase.